Here is a 364-residue protein sequence, read N- to C-terminus: Aminomethyltransferase (364 aa).

It belongs to the GcvT family. The glycine cleavage system is composed of four proteins: P, T, L and H.

It catalyses the reaction N(6)-[(R)-S(8)-aminomethyldihydrolipoyl]-L-lysyl-[protein] + (6S)-5,6,7,8-tetrahydrofolate = N(6)-[(R)-dihydrolipoyl]-L-lysyl-[protein] + (6R)-5,10-methylene-5,6,7,8-tetrahydrofolate + NH4(+). The glycine cleavage system catalyzes the degradation of glycine. This Thermotoga sp. (strain RQ2) protein is Aminomethyltransferase.